The following is a 614-amino-acid chain: Autophagy-related protein 22-1 (614 aa).

The disordered stretch occupies residues 1 to 29; it reads MQNCTNSPEDQAASVCPPPPQFPGDDTRP. An N-linked (GlcNAc...) asparagine glycan is attached at Asn3. 4 consecutive transmembrane segments (helical) span residues 41-61, 126-146, 160-180, and 185-205; these read YGWA…PITL, TASF…ILII, MLLV…LAVV, and LLGG…FVLL. Residues 229–254 form a disordered region; that stretch reads PTGTSHDSTSTADGPGQTDGTETTSL. Residues 230–254 show a composition bias toward polar residues; the sequence is TGTSHDSTSTADGPGQTDGTETTSL. 8 consecutive transmembrane segments (helical) span residues 291–311, 322–342, 383–403, 417–437, 452–472, 486–506, 523–545, and 554–574; these read GIGI…LVVV, LVLF…AMWL, ILLF…VSGT, AALG…AFSW, IVAC…GFIP, WEMY…SSYC, YALY…GIIT, and AFVF…LVDV.

The protein belongs to the ATG22 family.

It is found in the vacuole membrane. Functionally, vacuolar effluxer which mediate the efflux of amino acids resulting from autophagic degradation. The release of autophagic amino acids allows the maintenance of protein synthesis and viability during nitrogen starvation. The sequence is that of Autophagy-related protein 22-1 (atg22-1) from Aspergillus niger (strain ATCC MYA-4892 / CBS 513.88 / FGSC A1513).